The sequence spans 513 residues: Cytochrome P450 1A2 (513 aa).

Residue Ser68 is glycosylated (O-linked (GlcNAc) serine). Phe225 is a binding site for substrate. Cys456 serves as a coordination point for heme.

Belongs to the cytochrome P450 family. As to quaternary structure, interacts with PGRMC1; the interaction requires PGRMC1 homodimerization. Heme serves as cofactor. Found in lung and liver.

The protein localises to the endoplasmic reticulum membrane. It localises to the microsome membrane. It catalyses the reaction an organic molecule + reduced [NADPH--hemoprotein reductase] + O2 = an alcohol + oxidized [NADPH--hemoprotein reductase] + H2O + H(+). The catalysed reaction is 17beta-estradiol + reduced [NADPH--hemoprotein reductase] + O2 = 2-hydroxy-17beta-estradiol + oxidized [NADPH--hemoprotein reductase] + H2O + H(+). The enzyme catalyses 17beta-estradiol + reduced [NADPH--hemoprotein reductase] + O2 = 4-hydroxy-17beta-estradiol + oxidized [NADPH--hemoprotein reductase] + H2O + H(+). It carries out the reaction estrone + reduced [NADPH--hemoprotein reductase] + O2 = 2-hydroxyestrone + oxidized [NADPH--hemoprotein reductase] + H2O + H(+). It catalyses the reaction estrone + reduced [NADPH--hemoprotein reductase] + O2 = 4-hydroxyestrone + oxidized [NADPH--hemoprotein reductase] + H2O + H(+). The catalysed reaction is cholesterol + reduced [NADPH--hemoprotein reductase] + O2 = 25-hydroxycholesterol + oxidized [NADPH--hemoprotein reductase] + H2O + H(+). The enzyme catalyses all-trans-retinol + reduced [NADPH--hemoprotein reductase] + O2 = all-trans-retinal + oxidized [NADPH--hemoprotein reductase] + 2 H2O + H(+). It carries out the reaction all-trans-retinal + reduced [NADPH--hemoprotein reductase] + O2 = all-trans-retinoate + oxidized [NADPH--hemoprotein reductase] + H2O + 2 H(+). It catalyses the reaction (5Z,8Z,11Z,14Z)-eicosatetraenoate + reduced [NADPH--hemoprotein reductase] + O2 = (14R,15S)-epoxy-(5Z,8Z,11Z)-eicosatrienoate + oxidized [NADPH--hemoprotein reductase] + H2O + H(+). The catalysed reaction is (5Z,8Z,11Z,14Z)-eicosatetraenoate + reduced [NADPH--hemoprotein reductase] + O2 = (14S,15R)-epoxy-(5Z,8Z,11Z)-eicosatrienoate + oxidized [NADPH--hemoprotein reductase] + H2O + H(+). The enzyme catalyses (5Z,8Z,11Z,14Z,17Z)-eicosapentaenoate + reduced [NADPH--hemoprotein reductase] + O2 = (17R,18S)-epoxy-(5Z,8Z,11Z,14Z)-eicosatetraenoate + oxidized [NADPH--hemoprotein reductase] + H2O + H(+). It carries out the reaction (4Z,7Z,10Z,13Z,16Z,19Z)-docosahexaenoate + reduced [NADPH--hemoprotein reductase] + O2 = (19R,20S)-epoxy-(4Z,7Z,10Z,13Z,16Z)-docosapentaenoate + oxidized [NADPH--hemoprotein reductase] + H2O + H(+). It catalyses the reaction (5S)-hydroperoxy-(6E,8Z,11Z,14Z)-eicosatetraenoate = 5-oxo-(6E,8Z,11Z,14Z)-eicosatetraenoate + H2O. The catalysed reaction is (12S)-hydroperoxy-(5Z,8Z,10E,14Z)-eicosatetraenoate = 12-oxo-(5Z,8Z,10E,14Z)-eicosatetraenoate + H2O. The enzyme catalyses (15S)-hydroperoxy-(5Z,8Z,11Z,13E)-eicosatetraenoate = 15-oxo-(5Z,8Z,11Z,13E)-eicosatetraenoate + H2O. It carries out the reaction (13S)-hydroperoxy-(9Z,11E)-octadecadienoate = 13-oxo-(9Z,11E)-octadecadienoate + H2O. It catalyses the reaction (5Z,8Z,11Z,14Z)-eicosatetraenoate + reduced [NADPH--hemoprotein reductase] + O2 = 13-hydroxy-(5Z,8Z,11Z,14Z)-eicosatetraenoate + oxidized [NADPH--hemoprotein reductase] + H2O + H(+). The catalysed reaction is (5Z,8Z,11Z,14Z)-eicosatetraenoate + reduced [NADPH--hemoprotein reductase] + O2 = 19-hydroxy-(5Z,8Z,11Z,14Z)-eicosatetraenoate + oxidized [NADPH--hemoprotein reductase] + H2O + H(+). The enzyme catalyses (9Z,12Z)-octadecadienoate + reduced [NADPH--hemoprotein reductase] + O2 = 11-hydroxy-(9Z,12Z)-octadecadienoate + oxidized [NADPH--hemoprotein reductase] + H2O + H(+). Its pathway is cofactor metabolism; retinol metabolism. It functions in the pathway steroid metabolism; cholesterol metabolism. The protein operates within lipid metabolism; arachidonate metabolism. A cytochrome P450 monooxygenase involved in the metabolism of various endogenous substrates, including fatty acids, steroid hormones and vitamins. Mechanistically, uses molecular oxygen inserting one oxygen atom into a substrate, and reducing the second into a water molecule, with two electrons provided by NADPH via cytochrome P450 reductase (NADPH--hemoprotein reductase). Catalyzes the hydroxylation of carbon-hydrogen bonds. Exhibits high catalytic activity for the formation of hydroxyestrogens from estrone (E1) and 17beta-estradiol (E2), namely 2-hydroxy E1 and E2. Metabolizes cholesterol toward 25-hydroxycholesterol, a physiological regulator of cellular cholesterol homeostasis. May act as a major enzyme for all-trans retinoic acid biosynthesis in the liver. Catalyzes two successive oxidative transformation of all-trans retinol to all-trans retinal and then to the active form all-trans retinoic acid. Primarily catalyzes stereoselective epoxidation of the last double bond of polyunsaturated fatty acids (PUFA), displaying a strong preference for the (R,S) stereoisomer. Catalyzes bisallylic hydroxylation and omega-1 hydroxylation of PUFA. May also participate in eicosanoids metabolism by converting hydroperoxide species into oxo metabolites (lipoxygenase-like reaction, NADPH-independent). Plays a role in the oxidative metabolism of xenobiotics. Catalyzes the N-hydroxylation of heterocyclic amines and the O-deethylation of phenacetin. Metabolizes caffeine via N3-demethylation. The sequence is that of Cytochrome P450 1A2 (CYP1A2) from Mesocricetus auratus (Golden hamster).